A 141-amino-acid polypeptide reads, in one-letter code: Nucleoside diphosphate kinase (141 aa).

ATP contacts are provided by Lys-11, Phe-59, Arg-87, Thr-93, Arg-104, and Asn-114. Residue His-117 is the Pros-phosphohistidine intermediate of the active site.

It belongs to the NDK family. As to quaternary structure, homotetramer. Mg(2+) serves as cofactor.

The protein resides in the cytoplasm. It carries out the reaction a 2'-deoxyribonucleoside 5'-diphosphate + ATP = a 2'-deoxyribonucleoside 5'-triphosphate + ADP. The catalysed reaction is a ribonucleoside 5'-diphosphate + ATP = a ribonucleoside 5'-triphosphate + ADP. In terms of biological role, major role in the synthesis of nucleoside triphosphates other than ATP. The ATP gamma phosphate is transferred to the NDP beta phosphate via a ping-pong mechanism, using a phosphorylated active-site intermediate. The chain is Nucleoside diphosphate kinase from Xanthomonas axonopodis pv. citri (strain 306).